We begin with the raw amino-acid sequence, 425 residues long: MAPITTSREEFDEIPTVVGIFSAFGLVFTVSLFAWICCQRKSSKSNKTPPYKFVHVLKGVDIYPENLNSKKKFGADDKNEVKNKPAVPKNSLHLDLEKRDLNGNFPKTNLKPGSPSDLENATPKLFLEGEKESVSPESLKSSTSLTSEEKQEKLGTLFFSLEYNFERKAFVVNIKEARGLPAMDEQSMTSDPYIKMTILPEKKHKVKTRVLRKTLDPAFDETFTFYGIPYTQIQELALHFTILSFDRFSRDDIIGEVLIPLSGIELSEGKMLMNREIIKRNVRKSSGRGELLISLCYQSTTNTLTVVVLKARHLPKSDVSGLSDPYVKVNLYHAKKRISKKKTHVKKCTPNAVFNELFVFDIPCEGLEDISVEFLVLDSERGSRNEVIGQLVLGAAAEGTGGEHWKEICDYPRRQIAKWHVLCDG.

The Vesicular portion of the chain corresponds to 1-16; sequence MAPITTSREEFDEIPT. The helical transmembrane segment at 17-37 threads the bilayer; that stretch reads VVGIFSAFGLVFTVSLFAWIC. At 38-425 the chain is on the cytoplasmic side; sequence CQRKSSKSNK…IAKWHVLCDG (388 aa). The span at 73–83 shows a compositional bias: basic and acidic residues; sequence FGADDKNEVKN. 2 disordered regions span residues 73–93 and 127–147; these read FGAD…NSLH and LEGE…SLTS. Ser135 is modified (phosphoserine; by MAPK8). The segment covering 135 to 146 has biased composition (low complexity); it reads SPESLKSSTSLT. 2 C2 domains span residues 153-274 and 287-420; these read KLGT…MLMN and GRGE…AKWH. Positions 246, 249, and 252 each coordinate Ca(2+).

It belongs to the synaptotagmin family. In terms of assembly, interacts with KIF1A; the interaction increases in presence of calcium and decreases when SYT4 is phosphorylated at Ser-135. Ca(2+) is required as a cofactor. Phosphorylation at Ser-135 by MAPK8/JNK1 reduces interaction with KIF1A and neuronal dense core vesicles mobility. Expressed in melanocytes. Expressed in brain. Within brain, expression is highest in hippocampus, with substantial levels also detected in amygdala and thalamus.

The protein localises to the cytoplasmic vesicle. It is found in the secretory vesicle. It localises to the neuronal dense core vesicle membrane. Synaptotagmin family member which does not bind Ca(2+). Involved in neuronal dense core vesicles (DCVs) mobility through its interaction with KIF1A. Upon increased neuronal activity, phosphorylation by MAPK8/JNK1 destabilizes the interaction with KIF1A and captures DCVs to synapses. Plays a role in dendrite formation by melanocytes. This Homo sapiens (Human) protein is Synaptotagmin-4 (SYT4).